A 965-amino-acid polypeptide reads, in one-letter code: Phosphatidylethanolamine N-methyltransferase (965 aa).

Positions 1 to 55 are disordered; sequence MSSSAADPFAARLNSDVRQRHPTASATSKNVEGTSQQKQQQQQQQSEANAAASRV. The Lumenal portion of the chain corresponds to 1–91; that stretch reads MSSSAADPFA…DPREPKNLSD (91 aa). A compositionally biased stretch (polar residues) spans 22–35; that stretch reads PTASATSKNVEGTS. The span at 36-45 shows a compositional bias: low complexity; it reads QQKQQQQQQQ. A helical membrane pass occupies residues 92–112; the sequence is VAVLAIIALHFLAAYYLPWGV. The Cytoplasmic portion of the chain corresponds to 113–115; sequence KRP. The helical transmembrane segment at 116–136 threads the bilayer; sequence LFAAIFMFWRLAYNVGIGYLL. Residues 137–201 are Lumenal-facing; it reads TIQSKYKLLV…EYNTWLTFRR (65 aa). Residues 202–222 form a helical membrane-spanning segment; sequence VVDLILMCDFISYCLFAIVCA. The Cytoplasmic segment spans residues 223–229; the sequence is HKPDGEG. The chain crosses the membrane as a helical span at residues 230 to 250; sequence LFMCFARWAAGITLVGFNLWV. Over 251 to 279 the chain is Lumenal; the sequence is KLDAHRVVKDYAWYWGDFFYLIEQELTFD. Residues 280-300 form a helical membrane-spanning segment; it reads GVFELAPHPMYSIGYAGYYGI. Residues 301–306 are Cytoplasmic-facing; sequence SMMAAS. A helical membrane pass occupies residues 307–327; sequence YDVLFISIIAHAAQFAFLVIV. Residues 328-389 lie on the Lumenal side of the membrane; sequence ENPHIEKTYN…IGLKNLDFFR (62 aa). Residues 390–410 form a helical membrane-spanning segment; that stretch reads ITDVAIVLLCAYLAVVTMVTP. The Cytoplasmic portion of the chain corresponds to 411 to 417; the sequence is NTRFYQA. A helical membrane pass occupies residues 418-438; it reads LFVLHALAWRLWYSAGLGVIL. Residues 439–467 are Lumenal-facing; it reads TMQSEEKMFTRHFLKYGESVGEAWRQWKG. A helical membrane pass occupies residues 468–488; the sequence is IYHLSNCLCHASFIAASYKMY. Residues 489–496 lie on the Cytoplasmic side of the membrane; sequence EFPADWTY. Residues 497–517 form a helical membrane-spanning segment; that stretch reads GWALLKHVVGLSLIALQVWTA. Topologically, residues 518-573 are lumenal; that stretch reads TSIYESLGEFGWFYGDFFFDSKRQLTYTSIYRFLNNPERVFGTAGLWGAALITWSR. Residues 574 to 594 traverse the membrane as a helical segment; the sequence is AIFLMALAGHFLTLAFLAYVE. Over 595 to 965 the chain is Cytoplasmic; it reads KPHMQKVYGR…TTPVDSKFSE (371 aa).

This sequence belongs to the class VI-like SAM-binding methyltransferase superfamily. CHO2 family.

It localises to the endoplasmic reticulum membrane. It catalyses the reaction a 1,2-diacyl-sn-glycero-3-phosphoethanolamine + S-adenosyl-L-methionine = a 1,2-diacyl-sn-glycero-3-phospho-N-methylethanolamine + S-adenosyl-L-homocysteine + H(+). The protein operates within phospholipid metabolism; phosphatidylcholine biosynthesis. Catalyzes the first step of the methylation pathway of phosphatidylcholine biosynthesis, the SAM-dependent methylation of phosphatidylethanolamine (PE) to phosphatidylmonomethylethanolamine (PMME). This Neurospora crassa (strain ATCC 24698 / 74-OR23-1A / CBS 708.71 / DSM 1257 / FGSC 987) protein is Phosphatidylethanolamine N-methyltransferase.